Here is a 730-residue protein sequence, read N- to C-terminus: ATP-dependent DNA helicase Hel308 (730 aa).

ATP-binding positions include Gln-28 and 46 to 53; that span reads IPTASGKT. Positions 33 to 199 constitute a Helicase ATP-binding domain; sequence EKGLLEGKNL…WLDAELVLSE (167 aa). A DEAH box motif is present at residues 144–147; the sequence is DEVH. Residues 232 to 433 form the Helicase C-terminal domain; the sequence is AVNLVLDTIK…ALRTHILSTI (202 aa).

This sequence belongs to the helicase family. Hel308 subfamily. Monomer.

It catalyses the reaction Couples ATP hydrolysis with the unwinding of duplex DNA by translocating in the 3'-5' direction.. The enzyme catalyses ATP + H2O = ADP + phosphate + H(+). In terms of biological role, DNA-dependent ATPase and 3'-5' DNA helicase that may be involved in repair of stalled replication forks. This chain is ATP-dependent DNA helicase Hel308, found in Methanosarcina mazei (strain ATCC BAA-159 / DSM 3647 / Goe1 / Go1 / JCM 11833 / OCM 88) (Methanosarcina frisia).